We begin with the raw amino-acid sequence, 887 residues long: Valine--tRNA ligase (887 aa).

Residues 45-55 carry the 'HIGH' region motif; the sequence is PNVTGILHMGH. Positions 528-532 match the 'KMSKS' region motif; the sequence is KMSKS. Lys531 provides a ligand contact to ATP. A coiled-coil region spans residues 817–887; sequence TGLLNNEAEI…LKESLKSFEE (71 aa).

This sequence belongs to the class-I aminoacyl-tRNA synthetase family. ValS type 1 subfamily. As to quaternary structure, monomer.

The protein localises to the cytoplasm. The enzyme catalyses tRNA(Val) + L-valine + ATP = L-valyl-tRNA(Val) + AMP + diphosphate. In terms of biological role, catalyzes the attachment of valine to tRNA(Val). As ValRS can inadvertently accommodate and process structurally similar amino acids such as threonine, to avoid such errors, it has a 'posttransfer' editing activity that hydrolyzes mischarged Thr-tRNA(Val) in a tRNA-dependent manner. The polypeptide is Valine--tRNA ligase (Fusobacterium nucleatum subsp. nucleatum (strain ATCC 25586 / DSM 15643 / BCRC 10681 / CIP 101130 / JCM 8532 / KCTC 2640 / LMG 13131 / VPI 4355)).